A 178-amino-acid chain; its full sequence is Gamma-crystallin S (178 aa).

Ser2 carries the N-acetylserine modification. The interval 2 to 5 (SKTG) is N-terminal arm. 2 consecutive Beta/gamma crystallin 'Greek key' domains span residues 6–44 (TKITFYEDKNFQGRRYDCDCDCADFHTYLSRCNSIKVEG) and 45–87 (GTWA…RAVH). The segment at 88–93 (LPSGGQ) is connecting peptide. 2 Beta/gamma crystallin 'Greek key' domains span residues 94 to 134 (YKIQ…KVLE) and 135 to 177 (GVWI…RRIV).

The protein belongs to the beta/gamma-crystallin family. As to quaternary structure, monomer.

Crystallins are the dominant structural components of the vertebrate eye lens. The protein is Gamma-crystallin S (CRYGS) of Homo sapiens (Human).